The primary structure comprises 246 residues: NAD(P)H-hydrate epimerase (246 aa).

In terms of domain architecture, YjeF N-terminal spans Ala12 to Pro234. Asn69–Asp73 provides a ligand contact to (6S)-NADPHX. Residues Asn70 and Asp138 each coordinate K(+). Residues Gly142–Pro148 and Asp173 contribute to the (6S)-NADPHX site. Thr176 is a K(+) binding site.

The protein belongs to the NnrE/AIBP family. It depends on K(+) as a cofactor.

It is found in the cytoplasm. The protein localises to the mitochondrion. It carries out the reaction (6R)-NADHX = (6S)-NADHX. The enzyme catalyses (6R)-NADPHX = (6S)-NADPHX. Catalyzes the epimerization of the S- and R-forms of NAD(P)HX, a damaged form of NAD(P)H that is a result of enzymatic or heat-dependent hydration. This is a prerequisite for the S-specific NAD(P)H-hydrate dehydratase to allow the repair of both epimers of NAD(P)HX. The polypeptide is NAD(P)H-hydrate epimerase (Saccharomyces cerevisiae (strain ATCC 204508 / S288c) (Baker's yeast)).